Here is a 729-residue protein sequence, read N- to C-terminus: Pentatricopeptide repeat-containing protein At4g04370 (729 aa).

PPR repeat units lie at residues Ser10–Pro44, Asp45–Ser79, Asp80–Arg110, Asp111–Pro145, Asp178–Arg208, Asp209–Pro243, Asp244–Val278, Asp279–Lys309, Asp310–Leu344, Ser345–Leu379, Asp380–Ser414, Trp415–Gln445, Asp447–Pro481, Cys482–Lys512, Asp513–Pro547, Asn548–Pro583, and Asn584–Asp618. A type E motif region spans residues Val619–Asn694. The interval Gly695–Met723 is type E(+) motif.

This sequence belongs to the PPR family. PCMP-E subfamily.

This chain is Pentatricopeptide repeat-containing protein At4g04370 (PCMP-E99), found in Arabidopsis thaliana (Mouse-ear cress).